A 229-amino-acid polypeptide reads, in one-letter code: Large ribosomal subunit protein uL1 (229 aa).

Belongs to the universal ribosomal protein uL1 family. As to quaternary structure, part of the 50S ribosomal subunit.

Binds directly to 23S rRNA. The L1 stalk is quite mobile in the ribosome, and is involved in E site tRNA release. Its function is as follows. Protein L1 is also a translational repressor protein, it controls the translation of the L11 operon by binding to its mRNA. This Phytoplasma australiense protein is Large ribosomal subunit protein uL1.